A 130-amino-acid polypeptide reads, in one-letter code: Lysozyme C (130 aa).

Positions 1–130 (KVWERCALAR…VEQYVEGCDL (130 aa)) constitute a C-type lysozyme domain. 4 disulfides stabilise this stretch: Cys-6-Cys-128, Cys-30-Cys-116, Cys-65-Cys-81, and Cys-77-Cys-95. Active-site residues include Glu-35 and Asp-53.

It belongs to the glycosyl hydrolase 22 family. Monomer.

It carries out the reaction Hydrolysis of (1-&gt;4)-beta-linkages between N-acetylmuramic acid and N-acetyl-D-glucosamine residues in a peptidoglycan and between N-acetyl-D-glucosamine residues in chitodextrins.. In terms of biological role, lysozymes have primarily a bacteriolytic function; those in tissues and body fluids are associated with the monocyte-macrophage system and enhance the activity of immunoagents. In Camelus dromedarius (Dromedary), this protein is Lysozyme C (LYZ).